The primary structure comprises 359 residues: 4-hydroxy-3-methylbut-2-en-1-yl diphosphate synthase (flavodoxin) (359 aa).

[4Fe-4S] cluster is bound by residues Cys265, Cys268, Cys300, and Glu307.

Belongs to the IspG family. [4Fe-4S] cluster is required as a cofactor.

The catalysed reaction is (2E)-4-hydroxy-3-methylbut-2-enyl diphosphate + oxidized [flavodoxin] + H2O + 2 H(+) = 2-C-methyl-D-erythritol 2,4-cyclic diphosphate + reduced [flavodoxin]. It participates in isoprenoid biosynthesis; isopentenyl diphosphate biosynthesis via DXP pathway; isopentenyl diphosphate from 1-deoxy-D-xylulose 5-phosphate: step 5/6. Functionally, converts 2C-methyl-D-erythritol 2,4-cyclodiphosphate (ME-2,4cPP) into 1-hydroxy-2-methyl-2-(E)-butenyl 4-diphosphate. The protein is 4-hydroxy-3-methylbut-2-en-1-yl diphosphate synthase (flavodoxin) of Lawsonia intracellularis (strain PHE/MN1-00).